The following is a 323-amino-acid chain: tRNA-cytidine(32) 2-sulfurtransferase (323 aa).

The PP-loop motif signature appears at 49-54; that stretch reads SGGKDS. Residues Cys124, Cys127, and Cys215 each contribute to the [4Fe-4S] cluster site.

The protein belongs to the TtcA family. Homodimer. The cofactor is Mg(2+). [4Fe-4S] cluster is required as a cofactor.

Its subcellular location is the cytoplasm. It carries out the reaction cytidine(32) in tRNA + S-sulfanyl-L-cysteinyl-[cysteine desulfurase] + AH2 + ATP = 2-thiocytidine(32) in tRNA + L-cysteinyl-[cysteine desulfurase] + A + AMP + diphosphate + H(+). It participates in tRNA modification. Its function is as follows. Catalyzes the ATP-dependent 2-thiolation of cytidine in position 32 of tRNA, to form 2-thiocytidine (s(2)C32). The sulfur atoms are provided by the cysteine/cysteine desulfurase (IscS) system. In Shewanella denitrificans (strain OS217 / ATCC BAA-1090 / DSM 15013), this protein is tRNA-cytidine(32) 2-sulfurtransferase.